A 292-amino-acid chain; its full sequence is Calponin-1 (292 aa).

Positions 28–131 (PQTERQLRVW…STLIALASQA (104 aa)) constitute a Calponin-homology (CH) domain. Calponin-like repeat units follow at residues 164-189 (IGLQ…RHLY), 204-229 (ISLQ…RQIF), and 243-268 (IGLQ…RQVY). Position 170 is a phosphothreonine; by ROCK2 (Thr170). Ser175 bears the Phosphoserine; by PKC, CaMK2 and ROCK2 mark. Phosphothreonine; by ROCK2 occurs at positions 180 and 184. The residue at position 184 (Thr184) is a Phosphothreonine; by PKC and CaMK2. Residues 185-193 (RRHLYDPKL) form a calmodulin-binding region. Thr259 is modified (phosphothreonine; by ROCK2).

It belongs to the calponin family. Post-translationally, phosphorylation by PKC or CaM kinase II reduces the binding of calponin to F-actin and tropomyosin. In terms of tissue distribution, smooth muscle, and tissues containing significant amounts of smooth muscle.

Its function is as follows. Thin filament-associated protein that is implicated in the regulation and modulation of smooth muscle contraction. It is capable of binding to actin, calmodulin and tropomyosin. The interaction of calponin with actin inhibits the actomyosin Mg-ATPase activity. This is Calponin-1 (CNN1) from Gallus gallus (Chicken).